The sequence spans 497 residues: Cysteine desulfurase, mitochondrial (497 aa).

Residues 1–33 (MLKSTATRSITRLSQVYNVPAATYRACLVSRRF) constitute a mitochondrion transit peptide. Pyridoxal 5'-phosphate contacts are provided by residues 168-169 (AT), Asn248, Gln276, and 296-298 (SSH). Lys299 is subject to N6-(pyridoxal phosphate)lysine. Residue Thr336 participates in pyridoxal 5'-phosphate binding. Catalysis depends on Cys421, which acts as the Cysteine persulfide intermediate. Position 421 (Cys421) interacts with [2Fe-2S] cluster.

This sequence belongs to the class-V pyridoxal-phosphate-dependent aminotransferase family. NifS/IscS subfamily. Requires pyridoxal 5'-phosphate as cofactor.

Its subcellular location is the mitochondrion. The catalysed reaction is (sulfur carrier)-H + L-cysteine = (sulfur carrier)-SH + L-alanine. In terms of biological role, catalyzes the removal of elemental sulfur from cysteine to produce alanine. It supplies the inorganic sulfur for iron-sulfur (Fe-S) clusters. Plays a role in both tRNA-processing and mitochondrial metabolism. Involved in the 2-thio-modification of both 5-carboxymethylaminomethyl-2-thiouridine in mitochondrial tRNAs and 5-methoxycarbonylmethyl-2-thiouridine (mcm5s2U) in cytoplasmic tRNAs. This Saccharomyces cerevisiae (strain ATCC 204508 / S288c) (Baker's yeast) protein is Cysteine desulfurase, mitochondrial.